A 509-amino-acid chain; its full sequence is Maturase K (509 aa).

This sequence belongs to the intron maturase 2 family. MatK subfamily.

It is found in the plastid. It localises to the chloroplast. Its function is as follows. Usually encoded in the trnK tRNA gene intron. Probably assists in splicing its own and other chloroplast group II introns. This chain is Maturase K, found in Chamaecyparis obtusa (Hinoki false-cypress).